The sequence spans 465 residues: Siroheme synthase (465 aa).

The segment at 1-203 is precorrin-2 dehydrogenase /sirohydrochlorin ferrochelatase; the sequence is MDFLPLFHSL…GRPAEAERLL (203 aa). Residues 22-23 and 43-44 contribute to the NAD(+) site; these read EV and PQ. Ser128 bears the Phosphoserine mark. The tract at residues 217–465 is uroporphyrinogen-III C-methyltransferase; the sequence is GEVYLVGAGP…AWFEGAREDA (249 aa). Residue Pro226 coordinates S-adenosyl-L-methionine. Asp249 (proton acceptor) is an active-site residue. Lys271 acts as the Proton donor in catalysis. Residues 302–304, Ile307, 332–333, Met384, and Gly413 each bind S-adenosyl-L-methionine; these read GGD and TA.

In the N-terminal section; belongs to the precorrin-2 dehydrogenase / sirohydrochlorin ferrochelatase family. It in the C-terminal section; belongs to the precorrin methyltransferase family.

It catalyses the reaction uroporphyrinogen III + 2 S-adenosyl-L-methionine = precorrin-2 + 2 S-adenosyl-L-homocysteine + H(+). The catalysed reaction is precorrin-2 + NAD(+) = sirohydrochlorin + NADH + 2 H(+). The enzyme catalyses siroheme + 2 H(+) = sirohydrochlorin + Fe(2+). It participates in cofactor biosynthesis; adenosylcobalamin biosynthesis; precorrin-2 from uroporphyrinogen III: step 1/1. The protein operates within cofactor biosynthesis; adenosylcobalamin biosynthesis; sirohydrochlorin from precorrin-2: step 1/1. It functions in the pathway porphyrin-containing compound metabolism; siroheme biosynthesis; precorrin-2 from uroporphyrinogen III: step 1/1. Its pathway is porphyrin-containing compound metabolism; siroheme biosynthesis; siroheme from sirohydrochlorin: step 1/1. It participates in porphyrin-containing compound metabolism; siroheme biosynthesis; sirohydrochlorin from precorrin-2: step 1/1. Its function is as follows. Multifunctional enzyme that catalyzes the SAM-dependent methylations of uroporphyrinogen III at position C-2 and C-7 to form precorrin-2 via precorrin-1. Then it catalyzes the NAD-dependent ring dehydrogenation of precorrin-2 to yield sirohydrochlorin. Finally, it catalyzes the ferrochelation of sirohydrochlorin to yield siroheme. In Pseudomonas aeruginosa (strain LESB58), this protein is Siroheme synthase.